The following is a 558-amino-acid chain: Glutamine-dependent NAD(+) synthetase (558 aa).

The region spanning 2 to 262 is the CN hydrolase domain; it reads FTIALAQLNP…LALLSYDLSS (261 aa). The active-site Proton acceptor; for glutaminase activity is Glu42. Lys117 (for glutaminase activity) is an active-site residue. Position 123 (Tyr123) interacts with L-glutamine. The active-site Nucleophile; for glutaminase activity is Cys153. Residues Ser190 and Lys196 each coordinate L-glutamine. Residues 284–558 are ligase; the sequence is ALVLGVGDYL…IAQAFHPQGS (275 aa). 304-311 contributes to the ATP binding site; that stretch reads GLSGGIDS. Asn387 is a deamido-NAD(+) binding site. Thr411 serves as a coordination point for ATP. Positions 416 and 526 each coordinate deamido-NAD(+).

This sequence in the C-terminal section; belongs to the NAD synthetase family.

The enzyme catalyses deamido-NAD(+) + L-glutamine + ATP + H2O = L-glutamate + AMP + diphosphate + NAD(+) + H(+). It participates in cofactor biosynthesis; NAD(+) biosynthesis; NAD(+) from deamido-NAD(+) (L-Gln route): step 1/1. Its function is as follows. Catalyzes the ATP-dependent amidation of deamido-NAD to form NAD. Uses L-glutamine as a nitrogen source. The chain is Glutamine-dependent NAD(+) synthetase from Synechocystis sp. (strain ATCC 27184 / PCC 6803 / Kazusa).